Consider the following 111-residue polypeptide: Secreted RxLR effector protein 159 (111 aa).

The first 21 residues, 1-21, serve as a signal peptide directing secretion; sequence MRGAYYVAIAFLVAASSRTAA. The RxLR-dEER motif lies at 50 to 71; that stretch reads RVLRGSRDLKDKLAVYANDEQR. An N-linked (GlcNAc...) asparagine glycan is attached at Asn81.

Belongs to the RxLR effector family.

The protein resides in the secreted. The protein localises to the host nucleus. It is found in the host cytoplasm. Functionally, secreted effector that completely suppresses the host cell death induced by cell death-inducing proteins. The protein is Secreted RxLR effector protein 159 of Plasmopara viticola (Downy mildew of grapevine).